Here is a 1460-residue protein sequence, read N- to C-terminus: MEQGMDYWLGQIQQKDVGKRLQVGPDLIEYLLDRQKSIDLEQDQTLLDRMVDGLATSWVNSSNYKVALLGMDILSELVSRLQDRFRTQLGTVLPSLMDRLGDAKDSVREQDQSLLIKIMEQASNPQYVWERMFSGFKHKNFRTREGVCLCLIATLNVYGANSLTLSKIVPHICNLLGDPNSQVRDAAINCLVEIYRHVGERVRADLSKKGLPQSRLNVIFTKFDEVQKSGTMILSASDKNFDDEDSVDGNRPSSASSSASSKAPQTARRGVSLGTARRPGPSSAAAKTGGTAKEGAGALDEEDFIRAFEDVPNVQIYSSRDLEESLNKIREILSDDKHDWEQRITALKKIRSLLLAGAAEYDNFFQQLRLLDGAFKLSAKDLRSQVVREACITLGHLSSVLGNKFDHGAEAIMPTVFNLVPNSAKIMATSGIVAIRLIIRHTHVPRLIPIITSNCTSKSVAVRRRCYDFLDLLLQEWQTHSLERHVSVLAETIKKGIHDADSEAKIVARKCYWGFHSHFSKEAEHLFHTLESSYQKALQSHLKNSDSIVSLPQSDRSSSSSQESLNRPLSTKRSPTGSTVSRASSTTSKSTPGSLQRSRSDIDVNAAATSKSKAASGASTAPFISVAALPPGSYASLGRIRTRRQSSGSTTSTASTPADTRGRSRAKVVSQSQPGSRSNSPGKLLGSSYGGIATGPQRVPQMPSSEKRSRIPRSQGCSRETSPSRIGLDRFGISQQGRIPSAMRVLSSSTDLEAAVADALLLGDSRNKKKPVRRRYEPYGMYSDDDANSDASSACSERSYSSKNGGIPHYLRQTEDVAEVLNHCASSNWSERKEGLLGLQNLLKSQRTLSRVELKRLCEIFTRMFADPHSKRVFSMFLETLVDFVIIHKDDLQDWLFILLTQLLKKMGADLLGSVQAKVQKALDVTRDSFPFDQQFNILMRFIVDQTQTPNLKVKVAILKYIESLARQMDPTDFVNSSETRLAVSRIITWTTEPKSSDVRKAAQIVLISLFELNTPEFTMLLGALPKTFQDGATKLLHNHLKNSSNSSMGSPSNTIGRTPSRHSSSRASPLTSPTNCSHGGLSPSMLDYDTENLNSDEIYSSLRGVTEAIEKFSFRSQVDLNEPVRRDSKKESELGSCDVGIASPASDLRGGTDMVEGGRMALDNKTSLLNTQPPRAFTGPRGREYNPYAYSDSINSYDKTALKEAVFDDDMDQLRDVSIDHSDLVADLLKELSNHNERVEERKGALCELLKITREDNLAVWEEHFKTILLLLLETLGDKDHAIRALALRVLREILRNQPARFKNYAELTIMKTLEAHKDSHKEVVRAAEEAASTLAGSIHPEQCIKVLCPIIQTADYPINLAAIKMQAKVIERISKESLHQILPDIIPGLLQGYDNTESSVRKASVFCLVAIYSVIGEELKPYLAQLTGSKMKLLNLYIKRAQTTNSNSSSSSDVSTHS.

HEAT repeat units lie at residues 87 to 124 and 163 to 200; these read TQLG…QASN and LTLS…HVGE. Positions 237 to 293 are disordered; that stretch reads SDKNFDDEDSVDGNRPSSASSSASSKAPQTARRGVSLGTARRPGPSSAAAKTGGTAK. The span at 279-293 shows a compositional bias: low complexity; the sequence is PGPSSAAAKTGGTAK. HEAT repeat units follow at residues 407-442 and 443-479; these read HGAE…IRHT and HVPR…EWQT. Disordered stretches follow at residues 545 to 605, 640 to 733, and 778 to 800; these read SDSI…IDVN, IRTR…RFGI, and PYGM…ERSY. The segment covering 550 to 569 has biased composition (low complexity); that stretch reads SLPQSDRSSSSSQESLNRPL. Polar residues predominate over residues 571–597; the sequence is TKRSPTGSTVSRASSTTSKSTPGSLQR. A compositionally biased stretch (low complexity) spans 645-659; sequence QSSGSTTSTASTPAD. Polar residues-rich tracts occupy residues 669–681 and 715–724; these read VSQS…SNSP and QGCSRETSPS. The segment covering 789–800 has biased composition (low complexity); that stretch reads SDASSACSERSY. The HEAT 5 repeat unit spans residues 942 to 979; it reads FIVDQTQTPNLKVKVAILKYIESLARQMDPTDFVNSSE. Residues 1041 to 1084 form a disordered region; it reads LKNSSNSSMGSPSNTIGRTPSRHSSSRASPLTSPTNCSHGGLSP. Residues 1042 to 1054 are compositionally biased toward low complexity; sequence KNSSNSSMGSPSN. The span at 1066–1078 shows a compositional bias: polar residues; sequence SRASPLTSPTNCS. 2 HEAT repeats span residues 1272–1309 and 1390–1427; these read LLLE…YAEL and GLLQ…YLAQ.

The protein belongs to the CLASP family.

The protein resides in the cytoplasm. It is found in the cytoskeleton. It localises to the microtubule organizing center. Its subcellular location is the centrosome. The protein localises to the chromosome. The protein resides in the centromere. It is found in the kinetochore. It localises to the spindle. Its subcellular location is the golgi apparatus. The protein localises to the trans-Golgi network. Functionally, microtubule plus-end tracking protein that promotes the stabilization of dynamic microtubules during anaphase. Plays a crucial role in chromatin-induced microtubule formation. May also act at microtubule minus ends. May be involved in the nucleation of noncentrosomal microtubules originating from the trans-Golgi network (TGN). This is CLIP-associating protein 1-A (clasp1-a) from Xenopus laevis (African clawed frog).